The primary structure comprises 547 residues: MTENAPTELAITGMTCDGCAAHVRKALEGVPGVREAQVSYPDATARVVLEGEVPMQRLIKAVVASGYGVHPRSDGASSTNDGQELHIAVIGSGGAAMACALKAVERGARVTLIERSTIGGTCVNIGCVPSKIMIRAAHIAHLRRESPFDGGIQAVAPTIQRTALLVQQQARVDELRHAKYEGILDGNPAITVLRGEARFKDSRSVVVHLNDGGERVVMFDRCLVATGASPAVPPIPGLKDTPYWTSTEGLVSESIPERLAVIGSSVVALELAQAFARLGSHVTILARGTLFLREDPAIGEAITAAFRAEGIEVLEHTQASQVAYADGEFVLATGHGELRADKLLVATGRAPNTRRLNLEAAGVAINAQGAIVIDQGMRTNSPNIYAAGDCTDQPQFVYVAAAAGTRAAINMMGGSAALDLTAMPAVVFTDPQVATVGYSGAEAHRDGIETDSRTLTLDNVPRALANFNTRGFIKLVAEVGSGRLIGVQVVAPEAGELIQTAALAIRNRMTVQELADQLFPYLTMVEGLKLAAQTFTRDVKQLSCCAG.

The 66-residue stretch at 5 to 70 folds into the HMA domain; it reads APTELAITGM…AVVASGYGVH (66 aa). The a metal cation site is built by C16 and C19. Residues A96 and T121 each coordinate FAD. C122 and C127 are disulfide-bonded. FAD contacts are provided by K131, A197, D389, and V397. Hg(2+) is bound by residues C544 and C545.

The protein belongs to the class-I pyridine nucleotide-disulfide oxidoreductase family. In terms of assembly, homodimer. The cofactor is FAD.

It carries out the reaction Hg + NADP(+) + H(+) = Hg(2+) + NADPH. Resistance to Hg(2+) in bacteria appears to be governed by a specialized system which includes mercuric reductase. MerA protein is responsible for volatilizing mercury as Hg(0). The polypeptide is Mercuric reductase (merA) (Acidithiobacillus ferrooxidans (Thiobacillus ferrooxidans)).